Consider the following 150-residue polypeptide: Transcriptional regulator MraZ (150 aa).

2 consecutive SpoVT-AbrB domains span residues 5 to 51 and 80 to 123; these read VANL…PQPE and ATEC…DEDT.

The protein belongs to the MraZ family. As to quaternary structure, forms oligomers.

Its subcellular location is the cytoplasm. It is found in the nucleoid. The polypeptide is Transcriptional regulator MraZ (Thioalkalivibrio sulfidiphilus (strain HL-EbGR7)).